The sequence spans 317 residues: MARKKISLIGGGQIGGVLAQLCALRELGDVVMFDIVEGLPQGKMLDIAEVGPVDGFDVCLKGTNSYADIAGSDVVIVTAGLPRKPGMSRDDLIEVNSKIMTQVAEGIKQYAPNSFVIVISNPLDAMVTLCQKITGFPYNRVIGQAGVLDSSRFAAFIAWELGVSVKDVVAVTLGGHGDDMVPLVRYTSVCGIPVMELLERKYKDKAKAKEVMEAMVKRTRGAGGEVVALLKTGSAFYSPASAAIAMTESILKDQKRVLPTCCFLQGEFGVNGYYVGVPAVLGENGVEQIIQFNLDAEEQAMMDKSVAAVKSLVDSLK.

NAD(+) is bound by residues 10-15 and D34; that span reads GGGQIG. Substrate contacts are provided by R83 and R89. NAD(+) contacts are provided by residues N96 and 119–121; that span reads ISN. The substrate site is built by N121 and R152. H176 functions as the Proton acceptor in the catalytic mechanism.

It belongs to the LDH/MDH superfamily. MDH type 3 family.

It catalyses the reaction (S)-malate + NAD(+) = oxaloacetate + NADH + H(+). Functionally, catalyzes the reversible oxidation of malate to oxaloacetate. This Geobacter metallireducens (strain ATCC 53774 / DSM 7210 / GS-15) protein is Malate dehydrogenase.